The primary structure comprises 377 residues: Histidinol-phosphate aminotransferase (377 aa).

An N6-(pyridoxal phosphate)lysine modification is found at Lys-230.

The protein belongs to the class-II pyridoxal-phosphate-dependent aminotransferase family. Histidinol-phosphate aminotransferase subfamily. Homodimer. Pyridoxal 5'-phosphate serves as cofactor.

The catalysed reaction is L-histidinol phosphate + 2-oxoglutarate = 3-(imidazol-4-yl)-2-oxopropyl phosphate + L-glutamate. Its pathway is amino-acid biosynthesis; L-histidine biosynthesis; L-histidine from 5-phospho-alpha-D-ribose 1-diphosphate: step 7/9. The sequence is that of Histidinol-phosphate aminotransferase from Mycobacterium leprae (strain Br4923).